Consider the following 198-residue polypeptide: Putative pseudouridine methyltransferase (198 aa).

2 residues coordinate S-adenosyl-L-methionine: Leu132 and Cys186.

It belongs to the methyltransferase superfamily. TrmY family.

The protein resides in the cytoplasm. The chain is Putative pseudouridine methyltransferase from Shewanella frigidimarina (strain NCIMB 400).